The following is a 344-amino-acid chain: MANPAPNLECRMYESRYPDVDMAVMIQVKTIADMGAYVSLLEYNNIEGMILFSELSRRRIRSISSLIKVGRTEPVMVLRVDRERGYIDLSKRRVSDEDKEACEERYNKSKLVHSIMRHVAETVGVDLEELYVNIGWPLYKKHGHAFEAFKIVVTDPDSVFDALTREVKETGPDGVEVTKVVPAVSEELKDAFLKDIRRRMTPQPMKIRADIELKCFQFDGVLHIKEAMKKAEAVGTDDCPVKIKLVAPPLYVLTTHTHYKEKGIVTLNKAIEACITAIEEHKGKLVVKEGARAVSERDDKLLAEHMAKLRMDNEEMSGDEGSEDEEEDTGMGEVDIDGGSGIIE.

Residues 21-92 form the S1 motif domain; it reads DMAVMIQVKT…ERGYIDLSKR (72 aa). Phosphoserine; by GCN2 is present on serine 56. The tract at residues 309-344 is disordered; the sequence is LRMDNEEMSGDEGSEDEEEDTGMGEVDIDGGSGIIE. Acidic residues predominate over residues 314–336; the sequence is EEMSGDEGSEDEEEDTGMGEVDI. A phosphoserine; by CK2 mark is found at serine 317 and serine 322.

This sequence belongs to the eIF-2-alpha family. As to quaternary structure, eukaryotic translation initiation factor 2 eIF2 is a heterotrimeric complex composed of an alpha, a beta and a gamma subunit. Phosphorylated at Ser-56 by GCN2. Phosphorylated at Ser-317 and Ser-322 by CK2.

It is found in the cytoplasm. Its subcellular location is the cytosol. Functionally, functions in the early steps of protein synthesis by forming a ternary complex with GTP and initiator tRNA. This complex binds to a 40S ribosomal subunit, followed by mRNA binding to form a 43S pre-initiation complex. Junction of the 60S ribosomal subunit to form the 80S initiation complex is preceded by hydrolysis of the GTP bound to eIF-2 and release of an eIF-2-GDP binary complex. In order for eIF-2 to recycle and catalyze another round of initiation, the GDP bound to eIF-2 must exchange with GTP by way of a reaction catalyzed by eIF2B. This Arabidopsis thaliana (Mouse-ear cress) protein is Eukaryotic translation initiation factor 2 subunit alpha.